Consider the following 153-residue polypeptide: Interleukin-4 (153 aa).

The first 24 residues, 1-24 (MGLTSQLLPPLFFLLACAGNFVHG), serve as a signal peptide directing secretion. Cystine bridges form between cysteine 27–cysteine 151, cysteine 48–cysteine 89, and cysteine 70–cysteine 123. Asparagine 62 is a glycosylation site (N-linked (GlcNAc...) asparagine).

Belongs to the IL-4/IL-13 family.

It localises to the secreted. Functionally, participates in at least several B-cell activation processes as well as of other cell types. It is a costimulator of DNA-synthesis. It induces the expression of class II MHC molecules on resting B-cells. It enhances both secretion and cell surface expression of IgE and IgG1. It also regulates the expression of the low affinity Fc receptor for IgE (CD23) on both lymphocytes and monocytes. Positively regulates IL31RA expression in macrophages. Stimulates autophagy in dendritic cells by interfering with mTORC1 signaling and through the induction of RUFY4. The polypeptide is Interleukin-4 (IL4) (Macaca fascicularis (Crab-eating macaque)).